A 226-amino-acid polypeptide reads, in one-letter code: MLTWLTRDSLTFPPLEKALHDPNGLLAAGGDLSPERLVQAYRHGCFPWYQDGQPILWWSPDPRTVLLPDQLHVSRSLAKLMRQGRYQVSFDTDFPAVIAACAAPRDYADGTWITDTMRNAYCELHRRGIAHSVEVRQDGELVGGLYGLAMGQLFFGESMFSRADNASKVGFVTLVNHLRDAGFVLIDCQMPTNHLHSLGAHAISRAEFASYLARHLDQPNSASWVA.

The protein belongs to the L/F-transferase family.

It localises to the cytoplasm. The enzyme catalyses N-terminal L-lysyl-[protein] + L-leucyl-tRNA(Leu) = N-terminal L-leucyl-L-lysyl-[protein] + tRNA(Leu) + H(+). It catalyses the reaction N-terminal L-arginyl-[protein] + L-leucyl-tRNA(Leu) = N-terminal L-leucyl-L-arginyl-[protein] + tRNA(Leu) + H(+). The catalysed reaction is L-phenylalanyl-tRNA(Phe) + an N-terminal L-alpha-aminoacyl-[protein] = an N-terminal L-phenylalanyl-L-alpha-aminoacyl-[protein] + tRNA(Phe). Its function is as follows. Functions in the N-end rule pathway of protein degradation where it conjugates Leu, Phe and, less efficiently, Met from aminoacyl-tRNAs to the N-termini of proteins containing an N-terminal arginine or lysine. This is Leucyl/phenylalanyl-tRNA--protein transferase from Pseudomonas putida (strain ATCC 47054 / DSM 6125 / CFBP 8728 / NCIMB 11950 / KT2440).